The sequence spans 522 residues: GMP synthase [glutamine-hydrolyzing] (522 aa).

The region spanning 5–204 (YILIIDFGSQ…VKNICNYTNV (200 aa)) is the Glutamine amidotransferase type-1 domain. The active-site Nucleophile is the Cys82. Catalysis depends on residues His178 and Glu180. The GMPS ATP-PPase domain occupies 205 to 397 (IKYSLSIRKI…IGIPKEIIFR (193 aa)). 232-238 (SGGIDSF) is an ATP binding site.

In terms of assembly, homodimer.

It carries out the reaction XMP + L-glutamine + ATP + H2O = GMP + L-glutamate + AMP + diphosphate + 2 H(+). It participates in purine metabolism; GMP biosynthesis; GMP from XMP (L-Gln route): step 1/1. Functionally, catalyzes the synthesis of GMP from XMP. This chain is GMP synthase [glutamine-hydrolyzing], found in Wigglesworthia glossinidia brevipalpis.